We begin with the raw amino-acid sequence, 103 residues long: Large ribosomal subunit protein uL24 (103 aa).

This sequence belongs to the universal ribosomal protein uL24 family. In terms of assembly, part of the 50S ribosomal subunit.

Functionally, one of two assembly initiator proteins, it binds directly to the 5'-end of the 23S rRNA, where it nucleates assembly of the 50S subunit. One of the proteins that surrounds the polypeptide exit tunnel on the outside of the subunit. This is Large ribosomal subunit protein uL24 (rplX) from Bacillus spizizenii (strain ATCC 23059 / NRRL B-14472 / W23) (Bacillus subtilis subsp. spizizenii).